The following is a 189-amino-acid chain: Chitin synthase 1 (189 aa).

The protein belongs to the chitin synthase family. Class I subfamily.

It localises to the cell membrane. The catalysed reaction is [(1-&gt;4)-N-acetyl-beta-D-glucosaminyl](n) + UDP-N-acetyl-alpha-D-glucosamine = [(1-&gt;4)-N-acetyl-beta-D-glucosaminyl](n+1) + UDP + H(+). In terms of biological role, polymerizes chitin, a structural polymer of the cell wall and septum, by transferring the sugar moiety of UDP-GlcNAc to the non-reducing end of the growing chitin polymer. The polypeptide is Chitin synthase 1 (CHS1) (Exophiala jeanselmei (Dematiaceous fungus)).